The following is a 728-amino-acid chain: MFVQKSIDLGHGRILSIETGKMAKQADGAAIVRLGDTMVLATVVSSKKTPPLGQDFFPLQVEYREKYSAAGRFPGGFFKREGRPSEKEILSARLIDRALRPLFPDGYYYETQIIISVISSDQVNDGDVLGGLAASAAIMVSDIPFQNPMSEVRVGRVNGLYIINPDVNELKESDIDMCIGGTNDTICMLEGEMNEISETEMLEAIQFGHTAIRKLCVLQQEVAAEVAKPKRLFVPTVIPTELDSFVRANCQSRLRELAYTPLGKEERAERTAAIYNETLAATLEHFRATISSEEAQADTAKALCLNEHIIEDQIHAVEKEVMRHMILDDAKRLDGRALDQVRPITIELGLIPRAHGSALFTRGETQALVTLTLGTQKDAQSVDNLTNSDDKRFYLHYNFPPFSVGECGRLGSIGRREIGHGNLAERSIKMVAPTEAEFPYTIRIVSDILESNGSSSMASVCGGTLALMDGGVPIRKPVSGIAMGLIKENDKYAVLSDILGNEDHLGDMDFKVSGTRDGITACQMDIKIDGLDYHIVENALEQARKGRLHILNEMEKAIPASRTDLATYAPRLTTIKIPSDCIGMVIGKGGETIRGITEETGAEINIADDGTVTIACTTKEGTDAALATIKSLTAKPEVGNIYVGKVRDVRDELGAFVEFLPKTDGLVHISEISSTRVAKVSDHLKVGDKVTVKLVDVRKDPRTGKTKFALSIKALEQPKQEGGEATQN.

Mg(2+) is bound by residues aspartate 503 and aspartate 509. Residues 570-629 (PRLTTIKIPSDCIGMVIGKGGETIRGITEETGAEINIADDGTVTIACTTKEGTDAALATI) enclose the KH domain. An S1 motif domain is found at 639 to 713 (GNIYVGKVRD…GKTKFALSIK (75 aa)).

This sequence belongs to the polyribonucleotide nucleotidyltransferase family. Mg(2+) is required as a cofactor.

The protein resides in the cytoplasm. The enzyme catalyses RNA(n+1) + phosphate = RNA(n) + a ribonucleoside 5'-diphosphate. Involved in mRNA degradation. Catalyzes the phosphorolysis of single-stranded polyribonucleotides processively in the 3'- to 5'-direction. The protein is Polyribonucleotide nucleotidyltransferase of Chlorobium chlorochromatii (strain CaD3).